Reading from the N-terminus, the 123-residue chain is ATP synthase epsilon chain (123 aa).

This sequence belongs to the ATPase epsilon chain family. In terms of assembly, F-type ATPases have 2 components, CF(1) - the catalytic core - and CF(0) - the membrane proton channel. CF(1) has five subunits: alpha(3), beta(3), gamma(1), delta(1), epsilon(1). CF(0) has three main subunits: a, b and c.

The protein localises to the cell inner membrane. Functionally, produces ATP from ADP in the presence of a proton gradient across the membrane. In Helicobacter pylori (strain HPAG1), this protein is ATP synthase epsilon chain.